A 232-amino-acid chain; its full sequence is Ubiquinone biosynthesis O-methyltransferase (232 aa).

Positions 36, 55, 76, and 120 each coordinate S-adenosyl-L-methionine.

It belongs to the methyltransferase superfamily. UbiG/COQ3 family.

It catalyses the reaction a 3-demethylubiquinol + S-adenosyl-L-methionine = a ubiquinol + S-adenosyl-L-homocysteine + H(+). It carries out the reaction a 3-(all-trans-polyprenyl)benzene-1,2-diol + S-adenosyl-L-methionine = a 2-methoxy-6-(all-trans-polyprenyl)phenol + S-adenosyl-L-homocysteine + H(+). It functions in the pathway cofactor biosynthesis; ubiquinone biosynthesis. Its function is as follows. O-methyltransferase that catalyzes the 2 O-methylation steps in the ubiquinone biosynthetic pathway. The protein is Ubiquinone biosynthesis O-methyltransferase of Pseudomonas fluorescens (strain SBW25).